Consider the following 125-residue polypeptide: MADLAKIEEQLSSLTLMQAAELVKMLEEKWGVSAAAPVAVAAVGAAAPAAEAVAEKTEFEVVLTAAGDKKVEVIKVVKDITGLGLIEAKKLVDEAPKPIKSNVKKAEADEIKGKLEAAGAKVELK.

It belongs to the bacterial ribosomal protein bL12 family. In terms of assembly, homodimer. Part of the ribosomal stalk of the 50S ribosomal subunit. Forms a multimeric L10(L12)X complex, where L10 forms an elongated spine to which 2 to 4 L12 dimers bind in a sequential fashion. Binds GTP-bound translation factors.

In terms of biological role, forms part of the ribosomal stalk which helps the ribosome interact with GTP-bound translation factors. Is thus essential for accurate translation. This Rickettsia conorii (strain ATCC VR-613 / Malish 7) protein is Large ribosomal subunit protein bL12.